A 624-amino-acid polypeptide reads, in one-letter code: 1-deoxy-D-xylulose-5-phosphate synthase (624 aa).

Residues His-80 and 121-123 each bind thiamine diphosphate; that span reads GHS. Mg(2+) is bound at residue Asp-152. Thiamine diphosphate contacts are provided by residues 153–154, Asn-181, Tyr-289, and Glu-371; that span reads GA. Residue Asn-181 participates in Mg(2+) binding.

This sequence belongs to the transketolase family. DXPS subfamily. In terms of assembly, homodimer. Mg(2+) serves as cofactor. The cofactor is thiamine diphosphate.

The enzyme catalyses D-glyceraldehyde 3-phosphate + pyruvate + H(+) = 1-deoxy-D-xylulose 5-phosphate + CO2. It participates in metabolic intermediate biosynthesis; 1-deoxy-D-xylulose 5-phosphate biosynthesis; 1-deoxy-D-xylulose 5-phosphate from D-glyceraldehyde 3-phosphate and pyruvate: step 1/1. Functionally, catalyzes the acyloin condensation reaction between C atoms 2 and 3 of pyruvate and glyceraldehyde 3-phosphate to yield 1-deoxy-D-xylulose-5-phosphate (DXP). This is 1-deoxy-D-xylulose-5-phosphate synthase from Blochmanniella pennsylvanica (strain BPEN).